An 814-amino-acid polypeptide reads, in one-letter code: G-type lectin S-receptor-like serine/threonine-protein kinase At1g61370 (814 aa).

A signal peptide spans 1–25; it reads MGKIGIVFFASLLFLLIIFPSCAFA. In terms of domain architecture, Bulb-type lectin spans 26 to 145; it reads AITRASPLSI…VSERNLWESF (120 aa). The Extracellular segment spans residues 26-433; it reads AITRASPLSI…SELAGSNRVK (408 aa). Residues Asn43, Asn54, Asn89, Asn95, Asn253, and Asn271 are each glycosylated (N-linked (GlcNAc...) asparagine). In terms of domain architecture, EGF-like spans 282 to 318; the sequence is PVSSCDVYNTCGPFGLCIRSNPPKCECLKGFVPKSDE. Intrachain disulfides connect Cys286-Cys298 and Cys292-Cys306. 4 N-linked (GlcNAc...) asparagine glycosylation sites follow: Asn324, Asn334, Asn340, and Asn383. The PAN domain maps to 337–423; the sequence is CDVNSSATAQ…GETLSIRLAS (87 aa). Intrachain disulfides connect Cys376–Cys397 and Cys380–Cys386. The helical transmembrane segment at 434–454 threads the bilayer; sequence IIVASIVSISVFMILVFASYW. Residues 455-814 lie on the Cytoplasmic side of the membrane; it reads YWRYKAKQND…NITQTAIVGR (360 aa). The Protein kinase domain occupies 501 to 786; the sequence is FSMENKLGQG…DLPKPKQPVF (286 aa). ATP contacts are provided by residues 507-515 and Lys529; that span reads LGQGGFGPV. Phosphoserine is present on residues Ser535 and Ser550. Residues 590-607 are caM-binding; it reads TKKLELDWPKRFEIIQGI. The Proton acceptor role is filled by Asp626. A phosphoserine mark is found at Ser630 and Ser643. Phosphothreonine is present on Thr660. Phosphoserine occurs at positions 703, 704, 797, and 802. Residue Thr809 is modified to Phosphothreonine.

The protein belongs to the protein kinase superfamily. Ser/Thr protein kinase family.

It is found in the cell membrane. The catalysed reaction is L-seryl-[protein] + ATP = O-phospho-L-seryl-[protein] + ADP + H(+). The enzyme catalyses L-threonyl-[protein] + ATP = O-phospho-L-threonyl-[protein] + ADP + H(+). The sequence is that of G-type lectin S-receptor-like serine/threonine-protein kinase At1g61370 from Arabidopsis thaliana (Mouse-ear cress).